A 167-amino-acid chain; its full sequence is Transcriptional repressor NrdR (167 aa).

The segment at 3-34 is a zinc-finger region; the sequence is CPFCRNPDSRVVDSRMADDGSAIRRRRQCPEC. An ATP-cone domain is found at 46-136; sequence LSVIKRSGVG…VYQAFESLED (91 aa). Residues 148–167 are disordered; the sequence is AQEDAAERPATPRKPEKTSL.

The protein belongs to the NrdR family. Zn(2+) is required as a cofactor.

In terms of biological role, negatively regulates transcription of bacterial ribonucleotide reductase nrd genes and operons by binding to NrdR-boxes. The polypeptide is Transcriptional repressor NrdR (Pseudarthrobacter chlorophenolicus (strain ATCC 700700 / DSM 12829 / CIP 107037 / JCM 12360 / KCTC 9906 / NCIMB 13794 / A6) (Arthrobacter chlorophenolicus)).